The sequence spans 882 residues: Protein PML (882 aa).

The tract at residues 1–48 (MEPAPARSPRPQQDPARPQEPTMPPPETPSEGRQPSPSPSPTERAPAS) is disordered. S8 carries the post-translational modification Phosphoserine; by HIPK2. Residues S36 and S38 each carry the phosphoserine; by HIPK2 and MAPK1 modification. S48 carries the post-translational modification Phosphoserine. 2 residues coordinate Zn(2+): C57 and C60. The RING-type zinc finger occupies 57–92 (CQQCQAEAKCPKLLPCLHTLCSGCLEASGMQCPICQ). K65 participates in a covalent cross-link: Glycyl lysine isopeptide (Lys-Gly) (interchain with G-Cter in SUMO1); alternate. K65 is covalently cross-linked (Glycyl lysine isopeptide (Lys-Gly) (interchain with G-Cter in SUMO2); alternate). Residues C72, H74, C77, C80, C88, and C91 each contribute to the Zn(2+) site. A Phosphoserine; by CHEK2 modification is found at S117. The B box-type 1; atypical zinc-finger motif lies at 124–166 (DAQAVCTRCKESADFWCFECEQLLCAKCFEAHQWFLKHEARPL). Zn(2+) contacts are provided by C129, C132, C151, and H155. K160 is covalently cross-linked (Glycyl lysine isopeptide (Lys-Gly) (interchain with G-Cter in SUMO1); alternate). A Glycyl lysine isopeptide (Lys-Gly) (interchain with G-Cter in SUMO2); alternate cross-link involves residue K160. K160 is covalently cross-linked (Glycyl lysine isopeptide (Lys-Gly) (interchain with G-Cter in SUMO1P1/SUMO5); alternate). Residues 183-236 (KTNNIFCSNPNHRTPTLTSIYCRGCSKPLCCSCALLDSSHSELKCDISAEIQQR) form a B box-type 2 zinc finger. Residues C189, H194, C215, and H222 each contribute to the Zn(2+) site. Residues 228–253 (DISAEIQQRQEELDAMTQALQEQDSA) are a coiled coil. Residue K380 forms a Glycyl lysine isopeptide (Lys-Gly) (interchain with G-Cter in SUMO2); alternate linkage. A Glycyl lysine isopeptide (Lys-Gly) (interchain with G-Cter in /SUMO5); alternate cross-link involves residue K380. Residue K380 forms a Glycyl lysine isopeptide (Lys-Gly) (interchain with G-Cter in ubiquitin); alternate linkage. K394 participates in a covalent cross-link: Glycyl lysine isopeptide (Lys-Gly) (interchain with G-Cter in SUMO2). K400 is covalently cross-linked (Glycyl lysine isopeptide (Lys-Gly) (interchain with G-Cter in SUMO1P1/SUMO5); alternate). Residues K400 and K401 each participate in a glycyl lysine isopeptide (Lys-Gly) (interchain with G-Cter in ubiquitin); alternate cross-link. K401 is covalently cross-linked (Glycyl lysine isopeptide (Lys-Gly) (interchain with G-Cter in SUMO2); alternate). Residue S403 is modified to Phosphoserine; by MAPK1 and MAPK7. The interaction with PER2 stretch occupies residues 448-555 (GAHPVPVYAF…ASGAGEAEER (108 aa)). A Glycyl lysine isopeptide (Lys-Gly) (interchain with G-Cter in SUMO2) cross-link involves residue K460. A disordered region spans residues 467-589 (DVSNTTTAQK…SESSDLQLEG (123 aa)). A compositionally biased stretch (polar residues) spans 468–484 (VSNTTTAQKRKCSQTQC). Residue K476 forms a Glycyl lysine isopeptide (Lys-Gly) (interchain with G-Cter in SUMO2); alternate linkage. A Glycyl lysine isopeptide (Lys-Gly) (interchain with G-Cter in ubiquitin); alternate cross-link involves residue K476. A Nuclear localization signal motif is present at residues 476–490 (KRKCSQTQCPRKVIK). A Glycyl lysine isopeptide (Lys-Gly) (interchain with G-Cter in SUMO2) cross-link involves residue K478. Glycyl lysine isopeptide (Lys-Gly) (interchain with G-Cter in SUMO2); alternate cross-links involve residues K487 and K490. At K487 the chain carries N6-acetyllysine; alternate. A compositionally biased stretch (basic and acidic residues) spans 489–501 (IKMESEEGKEARL). A Glycyl lysine isopeptide (Lys-Gly) (interchain with G-Cter in SUMO1); alternate cross-link involves residue K490. K490 is covalently cross-linked (Glycyl lysine isopeptide (Lys-Gly) (interchain with G-Cter in SUMO1P1/SUMO5); alternate). Phosphoserine is present on S493. K497 participates in a covalent cross-link: Glycyl lysine isopeptide (Lys-Gly) (interchain with G-Cter in SUMO1); alternate. A Glycyl lysine isopeptide (Lys-Gly) (interchain with G-Cter in SUMO2); alternate cross-link involves residue K497. K497 is covalently cross-linked (Glycyl lysine isopeptide (Lys-Gly) (interchain with G-Cter in SUMO1P1/SUMO5); alternate). S504 bears the Phosphoserine mark. The residue at position 505 (S505) is a Phosphoserine; by MAPK1. Positions 505–516 (SPEQPRPSTSKA) are enriched in polar residues. S512 carries the post-translational modification Phosphoserine. K515 carries the post-translational modification N6-acetyllysine. S518, S527, and S530 each carry phosphoserine. S518 carries the post-translational modification Phosphoserine; by CDK1 and CDK2. S527 and S530 each carry phosphoserine; by MAPK1. The segment at 556–562 (VVVISSS) is sumo interaction motif (SIM). At S565 the chain carries Phosphoserine. Phosphoserine; by CK2 is present on S565. A Phosphothreonine modification is found at T867.

Key component of PML bodies. PML bodies are formed by the interaction of PML homodimers (via SUMO-binding motif) with sumoylated PML, leading to the assembly of higher oligomers. Several types of PML bodies have been observed. PML bodies can form hollow spheres that can sequester target proteins inside. Interacts (via SUMO-binding motif) with sumoylated proteins. Interacts (via C-terminus) with p53/TP53. Recruits p53/TP53 and CHEK2 into PML bodies, which promotes p53/TP53 phosphorylation at 'Ser-20' and prevents its proteasomal degradation. Interacts with MDM2, and sequesters MDM2 in the nucleolus, thereby preventing ubiquitination of p53/TP53. Interaction with PML-RARA oncoprotein and certain viral proteins causes disassembly of PML bodies and abolishes the normal PML function. Interacts with HIPK2, TERT, SIRT1, TOPBP1, TRIM27 and TRIM69. Interacts with ELF4 (via C-terminus). Interacts with ITPR3. Interacts (in the cytoplasm) with TGFBR1, TGFBR2 and PKM. Interacts (via the coiled-coil domain and when sumoylated) with SATB1. Interacts with UBE2I; the interaction is enhanced by arsenic binding. Interacts (PML-RARA oncoprotein, via the coiled-coil domain) with UBE2I; the interaction is enhanced by arsenic binding and is required for PML-RARA oncoprotein sumoylation and inhibition of RARA transactivational activity. Interacts with RB1, PPP1A, SMAD2, SMAD3, DAXX, RPL11 and MTOR. Interacts with PPARGC1A and KAT2A. Interacts with CSNK2A1 and CSNK2A3. Interacts with ANKRD2; the interaction is direct. Interacts (via SUMO-interacting motif) with sumoylated MORC3. Isoform PML-1, isoform PML-2, isoform PML-3, isoform PML-4, isoform PML-5 and isoform PML-6 interact with RNF4. Isoform PML-1 interacts with NLRP3. Isoform PML-1, isoform PML-2, isoform PML-3, isoform PML-4 and isoform PML-5 interact with MAGEA2, RBL2, PER2 and E2F4. Isoform PML-2 interacts with CIITA. Isoform PML-2, isoform PML-3 and isoform PML-4 interact with TBX2. Isoform PML-4 interacts with RANBP2, HDAC7, KAT6A, WRN, PIN1, TBX3 and phosphorylated MAPK1/ERK2. Isoform PML-4 interacts with the CTNNB1 and TCF7L2/TCF4 complex. Isoform PML-4 preferentially interacts with MAPK7/BMK1 although other isoforms (isoform PML-1, isoform PML-2, isoform PML-3 and isoform PML-6) also interact with it. Isoform PML-12 interacts with PIAS1, PIAS2 (isoform PIAS2-alpha) and CSNK2A1/CK2. Interacts with TRIM16. Interacts with PRDM1/Blimp-1. Interacts (via RING-type zinc finger) with EIF4E; the interaction results in conformational changes of both interacting proteins and reduces EIF4E affinity for the 5' m7G cap of mRNA, thus reducing EIF4E-mediated mRNA nuclear export. In terms of assembly, (Microbial infection) Interacts with Lassa virus Z protein and rabies virus phosphoprotein. As to quaternary structure, (Microbial infection) Isoform PML-1 interacts with herpes simplex virus-1/HHV-1 ICP0. (Microbial infection) Isoform PML-2 interacts with human adenovirus 2 E1A and this interaction stimulates E1A-dependent transcriptional activation. In terms of assembly, (Microbial infection) Isoform PML-4 interacts with VZV capsid protein VP26/ORF23 capsid protein. As to quaternary structure, (Microbial infection) The sumoylated isoform PML-4 interacts with encephalomyocarditis virus (EMCV) RNA-directed RNA polymerase 3D-POL (P3D-POL). (Microbial infection) Isoform PML-6 interacts with moloney murine leukemia virus (MoMLV) integrase (IN) and reverse transcriptase (RT). In terms of assembly, (Microbial infection) Isoform PML-4 and isoform PML-5 interact with human adenovirus 5 E1B-55K protein; these interactions promote efficient subnuclear targeting of E1B-55K to PML nuclear bodies. As to quaternary structure, (Microbial infection) Isoform PML-3 interacts (via RING-type zinc finger) with human foamy virus bel1/tas and bet. (Microbial infection) Interacts with human cytomegalovirus (HHV-5) immediate early protein IE1; this interaction mediates PML desumoylation and PML-mediated sumoylation of IE1. In terms of processing, ubiquitinated; mediated by RNF4, RNF111, UHRF1, UBE3A/E6AP, BCR(KLHL20) E3 ubiquitin ligase complex E3 ligase complex, SIAH1 or SIAH2 and leading to subsequent proteasomal degradation. Ubiquitination by BCR(KLHL20) E3 ubiquitin ligase complex E3 ligase complex requires CDK1/2-mediated phosphorylation at Ser-518 which in turn is recognized by prolyl-isopeptidase PIN1 and PIN1-catalyzed isomerization further potentiates PML interaction with KLHL20. 'Lys-6'-, 'Lys-11'-, 'Lys-48'- and 'Lys-63'-linked polyubiquitination by RNF4 is polysumoylation-dependent. Ubiquitination by RNF111 is polysumoylation-dependent. Sumoylation regulates PML's: stability in response to extracellular or intracellular stimuli, transcription directly and indirectly, through sequestration of or dissociation of the transcription factors from PML-NBs, ability to regulate apoptosis and its anti-viral activities. It is also essential for: maintaining proper PML nuclear bodies (PML-NBs) structure and normal function, recruitment of components of PML-NBs, the turnover and retention of PML in PML-NBs and the integrity of PML-NBs. Undergoes 'Lys-11'-linked sumoylation. Sumoylation on all three sites (Lys-65, Lys-160 and Lys-490) is required for nuclear body formation. Sumoylation on Lys-160 is a prerequisite for sumoylation on Lys-65. Lys-65 and Lys-160 are sumoylated by PISA1 and PIAS2. PIAS1-mediated sumoylation of PML promotes its interaction with CSNK2A1/CK2 and phosphorylation at Ser-565 which in turn triggers its ubiquitin-mediated degradation. PIAS1-mediated sumoylation of PML-RARA promotes its ubiquitin-mediated degradation. The PML-RARA fusion protein requires the coiled-coil domain for sumoylation. Sumoylation at Lys-490 by RANBP2 is essential for the proper assembly of PML-NBs. SUMO1P1/SUMO5 conjugated PML at Lys-160, Lys-380, Lys-400, Lys-490 and Lys-497, but Lys-380, Lys-400 and Lys-497 are not key acceptor lysines. SUMO1P1/SUMO5 forms polymeric chain on Lys-160 of PML by successive conjugation at 'Lys-18'; facilitating recruitment of PML-NB components, which enlarges PML. SUMO1P1/SUMO5 conjugation of PML increases SUMO2/3 conjugation, which leads to the recruitment of RNF4 and ubiquitin-dependent disintegration of PML-NBs. SUMO1P1/SUMO5 monoconjugated Lys-490. DNA damage triggers its sumoylation while some but not all viral infections can abolish sumoylation. Desumoylated by SENP1, SENP2, SENP3, SENP5 and SENP6. Arsenic induces PML and PML-RARA polysumoylation and their subsequent RNF4-dependent ubiquitination and proteasomal degradation, and is used as treatment in acute promyelocytic leukemia (APL). The nuclear isoforms (isoform PML-1, isoform PML-2, isoform PML-3, isoform PML-4, isoform PML-5 and isoform PML-6) show an increased sumoylation in response to arsenic trioxide. The cytoplasmic isoform PML-7 is not sumoylated. Post-translationally, phosphorylation is a major regulatory mechanism that controls PML protein abundance and the number and size of PML nuclear bodies (PML-NBs). Phosphorylated in response to DNA damage, probably by ATR. HIPK2-mediated phosphorylation at Ser-8, Ser-36 and Ser-38 leads to increased accumulation of PML protein and its sumoylation and is required for the maximal pro-apoptotic activity of PML after DNA damage. CHEK2-mediated phosphorylation at Ser-117 is important for PML-mediated apoptosis following DNA damage. MAPK1-mediated phosphorylations at Ser-403, Ser-505, Ser-527 and Ser-530 and CDK1/2-mediated phosphorylation at Ser-518 promote PIN1-dependent PML degradation. CK2-mediated phosphorylation at Ser-565 primes PML ubiquitination via an unidentified ubiquitin ligase. In terms of processing, (Microbial infection) Upon infection with Epstein-Barr virus, phosphorylated by CK2. Viral EBNA1 increases the association of CK2 with PML proteins, which increases PML phosphorylation by CK2, triggering the USP7-dependent polyubiquitylation and degradation of PML. Acetylation at Lys-487 is essential for its nuclear localization. Deacetylated at Lys-487 by SIRT1 and this deacetylation promotes PML control of PER2 nuclear localization. Post-translationally, (Microbial infection) Immediate early protein IE1 of human cytomegalovirus (HHV-5) interferes with the sumoylation of PML. Immediate early protein IE1 inhibits PML de novo sumoylation. In terms of processing, (Microbial infection) Cleaved at two different sites by enterovirus 71 protease 3C, leading to impaired PML-Nuclear bodies formation.

It localises to the nucleus. Its subcellular location is the nucleoplasm. The protein localises to the cytoplasm. The protein resides in the PML body. It is found in the nucleolus. It localises to the endoplasmic reticulum membrane. Its subcellular location is the early endosome membrane. It participates in protein modification; protein sumoylation. Functions via its association with PML-nuclear bodies (PML-NBs) in a wide range of important cellular processes, including tumor suppression, transcriptional regulation, apoptosis, senescence, DNA damage response, and viral defense mechanisms. Acts as the scaffold of PML-NBs allowing other proteins to shuttle in and out, a process which is regulated by SUMO-mediated modifications and interactions. Inhibits EIF4E-mediated mRNA nuclear export by reducing EIF4E affinity for the 5' 7-methylguanosine (m7G) cap of target mRNAs. Isoform PML-4 has a multifaceted role in the regulation of apoptosis and growth suppression: activates RB1 and inhibits AKT1 via interactions with PP1 and PP2A phosphatases respectively, negatively affects the PI3K pathway by inhibiting MTOR and activating PTEN, and positively regulates p53/TP53 by acting at different levels (by promoting its acetylation and phosphorylation and by inhibiting its MDM2-dependent degradation). Isoform PML-4 also: acts as a transcriptional repressor of TBX2 during cellular senescence and the repression is dependent on a functional RBL2/E2F4 repressor complex, regulates double-strand break repair in gamma-irradiation-induced DNA damage responses via its interaction with WRN, acts as a negative regulator of telomerase by interacting with TERT, and regulates PER2 nuclear localization and circadian function. Isoform PML-6 inhibits specifically the activity of the tetrameric form of PKM. The nuclear isoforms (isoform PML-1, isoform PML-2, isoform PML-3, isoform PML-4 and isoform PML-5) in concert with SATB1 are involved in local chromatin-loop remodeling and gene expression regulation at the MHC-I locus. Isoform PML-2 is required for efficient IFN-gamma induced MHC II gene transcription via regulation of CIITA. Cytoplasmic PML is involved in the regulation of the TGF-beta signaling pathway. PML also regulates transcription activity of ELF4 and can act as an important mediator for TNF-alpha- and IFN-alpha-mediated inhibition of endothelial cell network formation and migration. Its function is as follows. Exhibits antiviral activity against both DNA and RNA viruses. The antiviral activity can involve one or several isoform(s) and can be enhanced by the permanent PML-NB-associated protein DAXX or by the recruitment of p53/TP53 within these structures. Isoform PML-4 restricts varicella zoster virus (VZV) via sequestration of virion capsids in PML-NBs thereby preventing their nuclear egress and inhibiting formation of infectious virus particles. The sumoylated isoform PML-4 restricts rabies virus by inhibiting viral mRNA and protein synthesis. The cytoplasmic isoform PML-14 can restrict herpes simplex virus-1 (HHV-1) replication by sequestering the viral E3 ubiquitin-protein ligase ICP0 in the cytoplasm. Isoform PML-6 shows restriction activity towards human cytomegalovirus (HHV-5) and influenza A virus strains PR8(H1N1) and ST364(H3N2). Sumoylated isoform PML-4 and isoform PML-12 show antiviral activity against encephalomyocarditis virus (EMCV) by promoting nuclear sequestration of viral polymerase (P3D-POL) within PML NBs. Isoform PML-3 exhibits antiviral activity against poliovirus by inducing apoptosis in infected cells through the recruitment and the activation of p53/TP53 in the PML-NBs. Isoform PML-3 represses human foamy virus (HFV) transcription by complexing the HFV transactivator, bel1/tas, preventing its binding to viral DNA. PML may positively regulate infectious hepatitis C viral (HCV) production and isoform PML-2 may enhance adenovirus transcription. Functions as an E3 SUMO-protein ligase that sumoylates (HHV-5) immediate early protein IE1, thereby participating in the antiviral response. Isoforms PML-3 and PML-6 display the highest levels of sumoylation activity. In Homo sapiens (Human), this protein is Protein PML (PML).